The following is a 305-amino-acid chain: Putative HTH-type transcriptional regulatory protein Saci_1344 (305 aa).

An HTH cro/C1-type domain is found at 128–183 (LREKREEKNMSLGELSQRLGVSRISVYDYEKEDSYVSIEVAEKLIEIFGDEVIGDI). A DNA-binding region (H-T-H motif) is located at residues 139-158 (LGELSQRLGVSRISVYDYEK).

In Sulfolobus acidocaldarius (strain ATCC 33909 / DSM 639 / JCM 8929 / NBRC 15157 / NCIMB 11770), this protein is Putative HTH-type transcriptional regulatory protein Saci_1344.